A 439-amino-acid polypeptide reads, in one-letter code: SET domain-containing protein 4 (439 aa).

Over residues 1–19 (MQRRRGRTERARKRRRRSS) the composition is skewed to basic residues. The disordered stretch occupies residues 1 to 25 (MQRRRGRTERARKRRRRSSGSRAVN). Residues 47–272 (TDLVPASFPG…KHQEVFICYG (226 aa)) form the SET domain. Tyr-271 contacts S-adenosyl-L-methionine.

This sequence belongs to the class V-like SAM-binding methyltransferase superfamily. SETD4 family. As to quaternary structure, forms a ternary complex with TBK1 and ZNF268; the interaction with TBK1 is ZNF268-dependent and leads to TBK1 monomethylation. In terms of tissue distribution, expressed in the forebrain subventricular zone, in quiescent neural stem cells.

It localises to the cytoplasm. Its subcellular location is the cytosol. The protein localises to the nucleus. The enzyme catalyses L-lysyl(4)-[histone H3] + S-adenosyl-L-methionine = N(6)-methyl-L-lysyl(4)-[histone H3] + S-adenosyl-L-homocysteine + H(+). The catalysed reaction is N(6)-methyl-L-lysyl(4)-[histone H3] + S-adenosyl-L-methionine = N(6),N(6)-dimethyl-L-lysyl(4)-[histone H3] + S-adenosyl-L-homocysteine + H(+). It carries out the reaction L-lysyl(20)-[histone H4] + S-adenosyl-L-methionine = N(6)-methyl-L-lysyl(20)-[histone H4] + S-adenosyl-L-homocysteine + H(+). It catalyses the reaction N(6)-methyl-L-lysyl(20)-[histone H4] + S-adenosyl-L-methionine = N(6),N(6)-dimethyl-L-lysyl(20)-[histone H4] + S-adenosyl-L-homocysteine + H(+). The enzyme catalyses N(6),N(6)-dimethyl-L-lysyl(20)-[histone H4] + S-adenosyl-L-methionine = N(6),N(6),N(6)-trimethyl-L-lysyl(20)-[histone H4] + S-adenosyl-L-homocysteine + H(+). The catalysed reaction is L-lysyl-[protein] + S-adenosyl-L-methionine = N(6)-methyl-L-lysyl-[protein] + S-adenosyl-L-homocysteine + H(+). Protein-lysine N-methyltransferase that methylates both histones and non-histone proteins. Via its catalytic activity, regulates many processes, including cell proliferation, cell differentiation, inflammatory response and apoptosis. Regulates the inflammatory response by mediating mono- and dimethylation of 'Lys-4' of histone H3 (H3K4me1 and H3K4me2, respectively), leading to activate the transcription of pro-inflammatory cytokines IL6 and TNF-alpha. Also involved in the regulation of stem cell quiescence by catalyzing the trimethylation of 'Lys-20' of histone H4 (H4K20me3), thereby promoting heterochromatin formation. In the brain, epigenetically controls quiescence of neural stem cells for sustaining a protected neural stem cell population and maintaining a stem cell reservoir for neurogenesis. Involved in proliferation, migration, paracrine and myogenic differentiation of bone marrow mesenchymal stem cells (BMSCs). Through the catalysis of XRCC5/Ku70 trimethylation, regulates BAX-mediated apoptosis. SETD4-catalyzed XRCC5 methylation results in XRCC5 translocation to the cytoplasm, where it interacts with BAX, sequestering it from the mitochondria, hence preventing BAX-mediated apoptosis. The polypeptide is SET domain-containing protein 4 (Mus musculus (Mouse)).